The chain runs to 435 residues: MAKNVIVVGTQWGDEGKGKIVDWLTDHAKGVVRFQGGHNAGHTLVVGEQVYKLNLVPSGIVRDGVECYIGNGVVLDIHHLLSEIAELEKGGIDVRSRLKISPGCPLILPYHSAIDKARECAKSEDKKIGTTGKGIGPTYEDKVSRRGLRVYDLFNPERFAEKLKEVLEYHNFVLTQYFKAPAVDFQTVYDQAMADAEQIKPLVTDVSAALYAANKAGSNLLFEGAQGTLLDIDHGTYPFVTSSNCVAGQASAGAGIGPGMLHYVLGITKAYCTRVGGGPFPSELDIETEGAPGYQMSQVGREFGTVTGRKRRCGWFDAAALRRSGRINGLTGLCITKLDVLDGLKELNICTGYKLDGKIIDLLPIGADEVVRCEPIYETMPGWTDTTFGVKRWEDLPVNAQSYLNRLEVLCEVPIAIVSTGPERDETILKQHPFK.

GTP is bound by residues 13-19 and 41-43; these read GDEGKGK and GHT. The active-site Proton acceptor is the Asp-14. Residues Asp-14 and Gly-41 each contribute to the Mg(2+) site. IMP-binding positions include 14–17, 39–42, Thr-131, Arg-145, Gln-226, Thr-241, and Arg-309; these read DEGK and NAGH. The active-site Proton donor is His-42. 305–311 contacts substrate; that stretch reads TVTGRKR. GTP-binding positions include Arg-311, 337-339, and 419-421; these read KLD and STG.

It belongs to the adenylosuccinate synthetase family. In terms of assembly, homodimer. Mg(2+) is required as a cofactor.

Its subcellular location is the cytoplasm. The enzyme catalyses IMP + L-aspartate + GTP = N(6)-(1,2-dicarboxyethyl)-AMP + GDP + phosphate + 2 H(+). The protein operates within purine metabolism; AMP biosynthesis via de novo pathway; AMP from IMP: step 1/2. Functionally, plays an important role in the de novo pathway of purine nucleotide biosynthesis. Catalyzes the first committed step in the biosynthesis of AMP from IMP. The protein is Adenylosuccinate synthetase of Dechloromonas aromatica (strain RCB).